The chain runs to 992 residues: ATP-dependent 6-phosphofructokinase subunit alpha (992 aa).

The tract at residues 1–558 (MNNSVYGVAF…LYSNFMSTTV (558 aa)) is N-terminal catalytic PFK domain 1. Residues G193, 256-257 (RS), and 286-289 (GDGS) contribute to the ATP site. D287 serves as a coordination point for Mg(2+). Residues 332–334 (SID), R369, 376–378 (MGR), E433, K460, and 466–469 (HVQR) contribute to the beta-D-fructose 6-phosphate site. The active-site Proton acceptor is D334. The segment at 559 to 572 (NDDGSQLLPEADRL) is interdomain linker. Residues 573 to 992 (NIAIVHVGAP…AAKEDSALYV (420 aa)) are C-terminal regulatory PFK domain 2. Beta-D-fructose 2,6-bisphosphate contacts are provided by residues R643, 700–704 (TVSNN), R738, 745–747 (QGG), E805, R831, 837–840 (HVQQ), and R929.

This sequence belongs to the phosphofructokinase type A (PFKA) family. ATP-dependent PFK group I subfamily. Eukaryotic two domain clade 'E' sub-subfamily. As to quaternary structure, heterooctamer of 4 alpha and 4 beta chains. Mg(2+) is required as a cofactor.

The protein resides in the cytoplasm. The enzyme catalyses beta-D-fructose 6-phosphate + ATP = beta-D-fructose 1,6-bisphosphate + ADP + H(+). The protein operates within carbohydrate degradation; glycolysis; D-glyceraldehyde 3-phosphate and glycerone phosphate from D-glucose: step 3/4. Allosterically activated by ADP, AMP, or fructose 2,6-bisphosphate, and allosterically inhibited by ATP or citrate. Functionally, catalyzes the phosphorylation of D-fructose 6-phosphate to fructose 1,6-bisphosphate by ATP, the first committing step of glycolysis. The polypeptide is ATP-dependent 6-phosphofructokinase subunit alpha (PFK1) (Kluyveromyces lactis (strain ATCC 8585 / CBS 2359 / DSM 70799 / NBRC 1267 / NRRL Y-1140 / WM37) (Yeast)).